The primary structure comprises 210 residues: Acyl-homoserine-lactone synthase (210 aa).

The protein belongs to the autoinducer synthase family.

It catalyses the reaction a fatty acyl-[ACP] + S-adenosyl-L-methionine = an N-acyl-L-homoserine lactone + S-methyl-5'-thioadenosine + holo-[ACP] + H(+). Functionally, required for the synthesis of OHHL (N-(3-oxohexanoyl)-L-homoserine lactone), an autoinducer molecule which binds to EsaR. OHHL is necessary for biosynthesis of EPS virulence factor (extracellular heteropolysaccharide) which plays a role in the development of Stewart's wilt on sweet corn. This is Acyl-homoserine-lactone synthase (esaI) from Pantoea stewartii subsp. stewartii (Erwinia stewartii).